Reading from the N-terminus, the 243-residue chain is Peptidyl-tRNA hydrolase (243 aa).

Tyrosine 14 lines the tRNA pocket. Histidine 19 serves as the catalytic Proton acceptor. TRNA is bound by residues phenylalanine 64, asparagine 66, and asparagine 112. A compositionally biased stretch (basic and acidic residues) spans 190-205; sequence KAEEEKPAKEMKDAGK. The tract at residues 190 to 243 is disordered; sequence KAEEEKPAKEMKDAGKKPASQSHIHQARNHNQPKLPATGPMADMLKKMFGKKGD. A compositionally biased stretch (polar residues) spans 208–221; that stretch reads ASQSHIHQARNHNQ.

It belongs to the PTH family. In terms of assembly, monomer.

The protein resides in the cytoplasm. It carries out the reaction an N-acyl-L-alpha-aminoacyl-tRNA + H2O = an N-acyl-L-amino acid + a tRNA + H(+). Its function is as follows. Hydrolyzes ribosome-free peptidyl-tRNAs (with 1 or more amino acids incorporated), which drop off the ribosome during protein synthesis, or as a result of ribosome stalling. In terms of biological role, catalyzes the release of premature peptidyl moieties from peptidyl-tRNA molecules trapped in stalled 50S ribosomal subunits, and thus maintains levels of free tRNAs and 50S ribosomes. The protein is Peptidyl-tRNA hydrolase of Rhizobium johnstonii (strain DSM 114642 / LMG 32736 / 3841) (Rhizobium leguminosarum bv. viciae).